Here is a 41-residue protein sequence, read N- to C-terminus: Large ribosomal subunit protein bL36 (41 aa).

This sequence belongs to the bacterial ribosomal protein bL36 family.

In Xylella fastidiosa (strain M23), this protein is Large ribosomal subunit protein bL36.